The primary structure comprises 639 residues: tRNA-dihydrouridine(47) synthase [NAD(P)(+)]-like (639 aa).

Polar residues-rich tracts occupy residues 1–19 (MAESDGSNNENGNLDTVTQ) and 54–65 (QTCSELSGNDAE). 2 disordered regions span residues 1-20 (MAESDGSNNENGNLDTVTQK) and 52-122 (DKQT…HSQF). Residues 66 to 85 (NTVRAEDAAEPEAKRIKLDD) show a composition bias toward basic and acidic residues. Basic residues predominate over residues 103 to 119 (EKKRARGQNKSRPHMKH). C3H1-type zinc fingers lie at residues 122–152 (FEENKLCPSVTQECASKCFFGDKCKFLHDVA) and 160–190 (EDIRPNCYLYETFGKCIYGVTCRFAKSHLGD). Residues 300–302 (PLT) and Gln-354 contribute to the FMN site. Cys-385 serves as the catalytic Proton donor. FMN contacts are provided by residues Lys-424, His-454, 486–488 (NGD), and 509–510 (AR).

This sequence belongs to the Dus family. Dus3 subfamily. FMN serves as cofactor.

The enzyme catalyses 5,6-dihydrouridine(47) in tRNA + NAD(+) = uridine(47) in tRNA + NADH + H(+). The catalysed reaction is 5,6-dihydrouridine(47) in tRNA + NADP(+) = uridine(47) in tRNA + NADPH + H(+). It carries out the reaction a 5,6-dihydrouridine in mRNA + NAD(+) = a uridine in mRNA + NADH + H(+). It catalyses the reaction a 5,6-dihydrouridine in mRNA + NADP(+) = a uridine in mRNA + NADPH + H(+). Functionally, catalyzes the synthesis of dihydrouridine, a modified base, in various RNAs, such as tRNAs, mRNAs and some long non-coding RNAs (lncRNAs). Mainly modifies the uridine in position 47 (U47) in the D-loop of most cytoplasmic tRNAs. Also able to mediate the formation of dihydrouridine in some mRNAs, thereby regulating their translation. This chain is tRNA-dihydrouridine(47) synthase [NAD(P)(+)]-like (dus3l), found in Xenopus tropicalis (Western clawed frog).